The chain runs to 265 residues: Deoxyribose-phosphate aldolase 2 (265 aa).

Asp108 acts as the Proton donor/acceptor in catalysis. Lys173 acts as the Schiff-base intermediate with acetaldehyde in catalysis. Lys207 acts as the Proton donor/acceptor in catalysis.

The protein belongs to the DeoC/FbaB aldolase family. DeoC type 2 subfamily.

It localises to the cytoplasm. The catalysed reaction is 2-deoxy-D-ribose 5-phosphate = D-glyceraldehyde 3-phosphate + acetaldehyde. It functions in the pathway carbohydrate degradation; 2-deoxy-D-ribose 1-phosphate degradation; D-glyceraldehyde 3-phosphate and acetaldehyde from 2-deoxy-alpha-D-ribose 1-phosphate: step 2/2. Catalyzes a reversible aldol reaction between acetaldehyde and D-glyceraldehyde 3-phosphate to generate 2-deoxy-D-ribose 5-phosphate. The protein is Deoxyribose-phosphate aldolase 2 (deoC2) of Yersinia pestis.